Consider the following 425-residue polypeptide: Enolase (425 aa).

Glutamine 163 contacts (2R)-2-phosphoglycerate. Glutamate 205 serves as the catalytic Proton donor. Mg(2+) is bound by residues aspartate 242, glutamate 285, and aspartate 312. Residues lysine 337, arginine 366, serine 367, and lysine 388 each contribute to the (2R)-2-phosphoglycerate site. Lysine 337 acts as the Proton acceptor in catalysis.

Belongs to the enolase family. Mg(2+) is required as a cofactor.

It is found in the cytoplasm. The protein resides in the secreted. Its subcellular location is the cell surface. The enzyme catalyses (2R)-2-phosphoglycerate = phosphoenolpyruvate + H2O. It functions in the pathway carbohydrate degradation; glycolysis; pyruvate from D-glyceraldehyde 3-phosphate: step 4/5. Its function is as follows. Catalyzes the reversible conversion of 2-phosphoglycerate (2-PG) into phosphoenolpyruvate (PEP). It is essential for the degradation of carbohydrates via glycolysis. The sequence is that of Enolase from Cereibacter sphaeroides (strain ATCC 17029 / ATH 2.4.9) (Rhodobacter sphaeroides).